The sequence spans 437 residues: ATP-dependent RNA helicase RhlB (437 aa).

The Q motif motif lies at Gln9–Ala37. Residues Leu40–Val219 form the Helicase ATP-binding domain. Ala53–Thr60 is a binding site for ATP. The short motif at Asp165 to Asp168 is the DEAD box element. Residues Arg245–Leu390 form the Helicase C-terminal domain. A disordered region spans residues Ala395 to Gln437. Residues Gln400–Arg424 are compositionally biased toward low complexity. The segment covering Asn425 to Gln437 has biased composition (basic residues).

This sequence belongs to the DEAD box helicase family. RhlB subfamily. In terms of assembly, component of the RNA degradosome, which is a multiprotein complex involved in RNA processing and mRNA degradation.

It localises to the cytoplasm. The enzyme catalyses ATP + H2O = ADP + phosphate + H(+). Functionally, DEAD-box RNA helicase involved in RNA degradation. Has RNA-dependent ATPase activity and unwinds double-stranded RNA. This is ATP-dependent RNA helicase RhlB from Photobacterium profundum (strain SS9).